A 117-amino-acid polypeptide reads, in one-letter code: Non-specific lipid-transfer protein 3 (117 aa).

An N-terminal signal peptide occupies residues 1 to 25; the sequence is MAGLVKLSCLVLACMIVAGPIATNA. 4 cysteine pairs are disulfide-bonded: C29–C76, C39–C53, C54–C99, and C74–C113.

The protein belongs to the plant LTP family.

Plant non-specific lipid-transfer proteins transfer phospholipids as well as galactolipids across membranes. May play a role in wax or cutin deposition in the cell walls of expanding epidermal cells and certain secretory tissues. In Brassica napus (Rape), this protein is Non-specific lipid-transfer protein 3 (LTP3).